The following is a 911-amino-acid chain: Inter-alpha-trypsin inhibitor heavy chain H1 (911 aa).

Residues Met-1 to Ala-27 form the signal peptide. A propeptide spanning residues Leu-28 to Arg-34 is cleaved from the precursor. A VIT domain is found at Ser-37–Glu-166. An S-linked (Hex...) cysteine glycan is attached at Cys-60. Phosphoserine is present on Ser-129. Residues Val-181–Lys-184 carry the Phagocytosis uptake signal motif. 2 disulfides stabilise this stretch: Cys-244–Cys-247 and Cys-268–Cys-540. N-linked (GlcNAc...) (complex) asparagine glycosylation occurs at Asn-285. One can recognise a VWFA domain in the interval Asn-290–Glu-450. The tract at residues Ser-387 to Phe-911 is hyaluronan-binding. Residues Thr-402 and Thr-407 each carry the phosphothreonine modification. Residue Asn-588 is glycosylated (N-linked (GlcNAc...) (complex) asparagine). Residue Thr-653 is glycosylated (O-linked (GalNAc...) threonine). Asp-672 is modified (aspartate 1-(chondroitin 4-sulfate)-ester). A propeptide spanning residues Pro-673 to Phe-911 is cleaved from the precursor. An N-linked (GlcNAc...) asparagine glycan is attached at Asn-750.

It belongs to the ITIH family. As to quaternary structure, I-alpha-I plasma protease inhibitors are assembled from one or two heavy chains (HC) and one light chain, bikunin. Inter-alpha-inhibitor (I-alpha-I) is composed of ITIH1/HC1, ITIH2/HC2 and bikunin. Interacts with TNFAIP6 (via Link and CUB domains). In terms of processing, heavy chains are linked to bikunin via chondroitin 4-sulfate esterified to the alpha-carboxyl of the C-terminal aspartate after propeptide cleavage. Post-translationally, the S-linked glycan is composed of two 6-carbon sugars, possibly Glc or Gal.

Its subcellular location is the secreted. May act as a carrier of hyaluronan in serum or as a binding protein between hyaluronan and other matrix protein, including those on cell surfaces in tissues to regulate the localization, synthesis and degradation of hyaluronan which are essential to cells undergoing biological processes. Its function is as follows. Contains a potential peptide which could stimulate a broad spectrum of phagocytotic cells. This chain is Inter-alpha-trypsin inhibitor heavy chain H1 (ITIH1), found in Homo sapiens (Human).